We begin with the raw amino-acid sequence, 452 residues long: GTPase Der (452 aa).

2 consecutive EngA-type G domains span residues 9 to 170 (KIIA…PEED) and 185 to 362 (LQIV…KTWN). Residues 15–22 (GRPNVGKS), 62–66 (DTPGL), 124–127 (NKCE), 191–198 (GRPNAGKS), 238–242 (DTAGL), and 303–306 (NKWD) each bind GTP. The KH-like domain maps to 363–448 (KKITTSKLNE…PIRFNYIKTK (86 aa)).

The protein belongs to the TRAFAC class TrmE-Era-EngA-EngB-Septin-like GTPase superfamily. EngA (Der) GTPase family. In terms of assembly, associates with the 50S ribosomal subunit.

Functionally, GTPase that plays an essential role in the late steps of ribosome biogenesis. This is GTPase Der from Rickettsia bellii (strain RML369-C).